The primary structure comprises 52 residues: uncharacterized protein (52 aa).

2 helical membrane passes run 4–24 (IIIPAILAIFALWILLQISLE) and 25–45 (MSIVKNPMNYFIVFIIFFLFV).

Its subcellular location is the cell membrane. This is an uncharacterized protein from Bacillus subtilis (strain 168).